Consider the following 541-residue polypeptide: 2-succinyl-5-enolpyruvyl-6-hydroxy-3-cyclohexene-1-carboxylate synthase (541 aa).

Belongs to the TPP enzyme family. MenD subfamily. As to quaternary structure, homodimer. Mg(2+) serves as cofactor. It depends on Mn(2+) as a cofactor. Thiamine diphosphate is required as a cofactor.

The catalysed reaction is isochorismate + 2-oxoglutarate + H(+) = 5-enolpyruvoyl-6-hydroxy-2-succinyl-cyclohex-3-ene-1-carboxylate + CO2. It functions in the pathway quinol/quinone metabolism; 1,4-dihydroxy-2-naphthoate biosynthesis; 1,4-dihydroxy-2-naphthoate from chorismate: step 2/7. It participates in quinol/quinone metabolism; menaquinone biosynthesis. Catalyzes the thiamine diphosphate-dependent decarboxylation of 2-oxoglutarate and the subsequent addition of the resulting succinic semialdehyde-thiamine pyrophosphate anion to isochorismate to yield 2-succinyl-5-enolpyruvyl-6-hydroxy-3-cyclohexene-1-carboxylate (SEPHCHC). This chain is 2-succinyl-5-enolpyruvyl-6-hydroxy-3-cyclohexene-1-carboxylate synthase, found in Leuconostoc citreum (strain KM20).